Consider the following 395-residue polypeptide: Argininosuccinate synthase (395 aa).

An ATP-binding site is contributed by 8–16 (AYSGGLDTS). L-citrulline is bound at residue tyrosine 86. Glycine 116 contacts ATP. 3 residues coordinate L-aspartate: threonine 118, asparagine 122, and aspartate 123. Asparagine 122 lines the L-citrulline pocket. L-citrulline contacts are provided by arginine 126, serine 173, serine 182, glutamate 257, and tyrosine 269.

This sequence belongs to the argininosuccinate synthase family. Type 1 subfamily. Homotetramer.

The protein resides in the cytoplasm. The catalysed reaction is L-citrulline + L-aspartate + ATP = 2-(N(omega)-L-arginino)succinate + AMP + diphosphate + H(+). Its pathway is amino-acid biosynthesis; L-arginine biosynthesis; L-arginine from L-ornithine and carbamoyl phosphate: step 2/3. This Methanocaldococcus jannaschii (strain ATCC 43067 / DSM 2661 / JAL-1 / JCM 10045 / NBRC 100440) (Methanococcus jannaschii) protein is Argininosuccinate synthase.